The chain runs to 565 residues: Urocanate hydratase (565 aa).

NAD(+) contacts are provided by residues 61–62 (GG), glutamine 139, 185–187 (GMG), glutamate 205, arginine 210, 251–252 (NA), 272–276 (QTSAH), 282–283 (YL), and tyrosine 331. Residue cysteine 419 is part of the active site. Residues 453–472 (LDSGSVASPNRETESMRDGS) are disordered. The segment covering 463-472 (RETESMRDGS) has biased composition (basic and acidic residues). Glycine 501 contributes to the NAD(+) binding site.

It belongs to the urocanase family. The cofactor is NAD(+).

The protein resides in the cytoplasm. The enzyme catalyses 4-imidazolone-5-propanoate = trans-urocanate + H2O. Its pathway is amino-acid degradation; L-histidine degradation into L-glutamate; N-formimidoyl-L-glutamate from L-histidine: step 2/3. In terms of biological role, catalyzes the conversion of urocanate to 4-imidazolone-5-propionate. In Pseudomonas syringae pv. syringae (strain B728a), this protein is Urocanate hydratase.